A 404-amino-acid polypeptide reads, in one-letter code: Probable tRNA sulfurtransferase (404 aa).

The region spanning 60–165 (TAVAESLKQV…EEAAYLSYET (106 aa)) is the THUMP domain. ATP is bound by residues 183-184 (ML), 208-209 (HF), R265, G287, and Q296.

The protein belongs to the ThiI family.

The protein localises to the cytoplasm. The catalysed reaction is [ThiI sulfur-carrier protein]-S-sulfanyl-L-cysteine + a uridine in tRNA + 2 reduced [2Fe-2S]-[ferredoxin] + ATP + H(+) = [ThiI sulfur-carrier protein]-L-cysteine + a 4-thiouridine in tRNA + 2 oxidized [2Fe-2S]-[ferredoxin] + AMP + diphosphate. It catalyses the reaction [ThiS sulfur-carrier protein]-C-terminal Gly-Gly-AMP + S-sulfanyl-L-cysteinyl-[cysteine desulfurase] + AH2 = [ThiS sulfur-carrier protein]-C-terminal-Gly-aminoethanethioate + L-cysteinyl-[cysteine desulfurase] + A + AMP + 2 H(+). It functions in the pathway cofactor biosynthesis; thiamine diphosphate biosynthesis. Functionally, catalyzes the ATP-dependent transfer of a sulfur to tRNA to produce 4-thiouridine in position 8 of tRNAs, which functions as a near-UV photosensor. Also catalyzes the transfer of sulfur to the sulfur carrier protein ThiS, forming ThiS-thiocarboxylate. This is a step in the synthesis of thiazole, in the thiamine biosynthesis pathway. The sulfur is donated as persulfide by IscS. The protein is Probable tRNA sulfurtransferase of Streptococcus pneumoniae (strain 70585).